The primary structure comprises 165 residues: Protein SprT (165 aa).

A SprT-like domain is found at 20–163; sequence EKLAQANLKL…RCVHCGEQLV (144 aa). H78 is a Zn(2+) binding site. The active site involves E79. Residue H82 coordinates Zn(2+).

The protein belongs to the SprT family. Zn(2+) is required as a cofactor.

It localises to the cytoplasm. The chain is Protein SprT from Shigella boydii serotype 18 (strain CDC 3083-94 / BS512).